Consider the following 205-residue polypeptide: Listeria nuclear targeted protein A (205 aa).

The first 36 residues, 1–36 (MKKLVAWFNGLSKMWKVVVIIGAVFVVIIALTTGED), serve as a signal peptide directing secretion.

In terms of assembly, interacts specifically with host BAHD1.

It is found in the secreted. It localises to the host nucleus. Relieves the repression of host cell immune response genes (interferon-stimulated genes) by blocking the recruitment of host BAHD1 to these genes. May modulate interferon-mediated immune response to control bacterial colonization of the host. This chain is Listeria nuclear targeted protein A (lntA), found in Listeria monocytogenes serovar 1/2a (strain ATCC BAA-679 / EGD-e).